The primary structure comprises 159 residues: Phosphopantetheine adenylyltransferase (159 aa).

Threonine 10 serves as a coordination point for substrate. Residues 10 to 11 (TF) and histidine 18 each bind ATP. Residues lysine 42, methionine 74, and arginine 88 each coordinate substrate. ATP-binding positions include 89-91 (GLR), glutamate 99, and 124-130 (WSFISSS).

It belongs to the bacterial CoaD family. In terms of assembly, homohexamer. It depends on Mg(2+) as a cofactor.

The protein localises to the cytoplasm. The catalysed reaction is (R)-4'-phosphopantetheine + ATP + H(+) = 3'-dephospho-CoA + diphosphate. Its pathway is cofactor biosynthesis; coenzyme A biosynthesis; CoA from (R)-pantothenate: step 4/5. Reversibly transfers an adenylyl group from ATP to 4'-phosphopantetheine, yielding dephospho-CoA (dPCoA) and pyrophosphate. This is Phosphopantetheine adenylyltransferase from Yersinia pestis.